Consider the following 485-residue polypeptide: MEKQVRVRYAPSPTGHLHIGNARTALFNYLFARHQDGKFIIRIEDTDVKRNVAGGEESQLKYLKWLGMDWDEGVDVGGEFGPYRQTERLDIYKKLYKDLLERDLAYKCYMTEEELEAEREGQIARGETPRYAGNHRDLTEEQIKGFEAEGRIPSIRFRVPADSDYTFKDLVKDEVAFHSNDFGDFVIVKKDGIPTYNFAVAVDDHLMEITHVLRGDDHISNTPKQMMIYEAFGWDIPKFGHMTLIVNESRKKLSKRDESIIQFIEQYKELGYLPEAIFNFIALLGWSPVGEEEVFSQDEFIKMFDAARLSKSPALFDSQKLKWMNNQYMKKQDLDTVVELSLPHLVKAGRVGENLSEQEQAWVRDVIALYHDQMSFGAEIVELSEMFFKDHVDHEEEGQEVLKGEQVPEVLRAFADQLEALEAMEPAAVKAAIKAVQKETGHKGKNLFMPIRVATTGQTHGPELPNAIALLGKEKVLNRIQKVIG.

The short motif at 11–21 is the 'HIGH' region element; the sequence is PSPTGHLHIGN. Positions 252–256 match the 'KMSKS' region motif; the sequence is KLSKR. Position 255 (K255) interacts with ATP.

The protein belongs to the class-I aminoacyl-tRNA synthetase family. Glutamate--tRNA ligase type 1 subfamily. As to quaternary structure, monomer.

It localises to the cytoplasm. The enzyme catalyses tRNA(Glu) + L-glutamate + ATP = L-glutamyl-tRNA(Glu) + AMP + diphosphate. Functionally, catalyzes the attachment of glutamate to tRNA(Glu) in a two-step reaction: glutamate is first activated by ATP to form Glu-AMP and then transferred to the acceptor end of tRNA(Glu). The protein is Glutamate--tRNA ligase of Bacillus mycoides (strain KBAB4) (Bacillus weihenstephanensis).